We begin with the raw amino-acid sequence, 422 residues long: 3-isopropylmalate dehydratase large subunit (422 aa).

Positions 294, 354, and 357 each coordinate [4Fe-4S] cluster.

This sequence belongs to the aconitase/IPM isomerase family. LeuC type 2 subfamily. In terms of assembly, heterodimer of LeuC and LeuD. It depends on [4Fe-4S] cluster as a cofactor.

It carries out the reaction (2R,3S)-3-isopropylmalate = (2S)-2-isopropylmalate. The protein operates within amino-acid biosynthesis; L-leucine biosynthesis; L-leucine from 3-methyl-2-oxobutanoate: step 2/4. Functionally, catalyzes the isomerization between 2-isopropylmalate and 3-isopropylmalate, via the formation of 2-isopropylmaleate. In Mycolicibacterium smegmatis (strain ATCC 700084 / mc(2)155) (Mycobacterium smegmatis), this protein is 3-isopropylmalate dehydratase large subunit.